A 162-amino-acid polypeptide reads, in one-letter code: uncharacterized protein (162 aa).

Residues 1–23 form the signal peptide; the sequence is MLSLKSPAVLLSMVILVPLFALA.

This is an uncharacterized protein from Mycosarcoma maydis (Corn smut fungus).